The following is a 326-amino-acid chain: Meiotically up-regulated gene 113 protein (326 aa).

It localises to the cytoplasm. Its function is as follows. Has a role in meiosis. In Schizosaccharomyces pombe (strain 972 / ATCC 24843) (Fission yeast), this protein is Meiotically up-regulated gene 113 protein (mug113).